We begin with the raw amino-acid sequence, 688 residues long: Elongation factor G (688 aa).

A tr-type G domain is found at 8–282 (DKFRNFGIMA…GVVDYLPSPL (275 aa)). GTP contacts are provided by residues 17–24 (AHIDAGKT), 81–85 (DTPGH), and 135–138 (NKMD).

Belongs to the TRAFAC class translation factor GTPase superfamily. Classic translation factor GTPase family. EF-G/EF-2 subfamily.

It is found in the cytoplasm. In terms of biological role, catalyzes the GTP-dependent ribosomal translocation step during translation elongation. During this step, the ribosome changes from the pre-translocational (PRE) to the post-translocational (POST) state as the newly formed A-site-bound peptidyl-tRNA and P-site-bound deacylated tRNA move to the P and E sites, respectively. Catalyzes the coordinated movement of the two tRNA molecules, the mRNA and conformational changes in the ribosome. The polypeptide is Elongation factor G (Clostridium beijerinckii (strain ATCC 51743 / NCIMB 8052) (Clostridium acetobutylicum)).